The chain runs to 466 residues: MPRTIIEKLWDSHVVHERPGAPTLLFIDLHLVHEVTSPQAFQGLRERGLKVRRPDLTIATADHSIPTTDRSLPIVDEIAAKQLAQLETNCKDFGIRCLGVHSSQQGIVHVIGPELGLTQPGMTVVCGDSHTATHGAFGALAFGIGTSEVEQVLASQCLLQRKSKTFQVKVDGALKAGVSAKDIILALIARIGIGGGTGSVFEYTGSAIRALSVEERMTVCNMSIEGGARAGLIAPDDATFEYLAGRPHAPKGAAWDAAIPRWKQLPTDDGATYDRSVSIDADTLEPMITYGTNPGMGVSINAALPDPSQVSDPMARDSITKALAYMGLEGGKPLVGHPIDVVFIGSCTNSRISDLRTAAGLLKGRKVSPKVRVMVVPGSQEVKRQAIAEGLPEIFRAAGCDYREPGCSMCIAMNGDQLAPGEYSVSTSNRNFEGRQGKGGRTFLASPLTAAASAITGVVTDVRTLL.

[4Fe-4S] cluster is bound by residues C347, C407, and C410.

This sequence belongs to the aconitase/IPM isomerase family. LeuC type 1 subfamily. Heterodimer of LeuC and LeuD. [4Fe-4S] cluster serves as cofactor.

The enzyme catalyses (2R,3S)-3-isopropylmalate = (2S)-2-isopropylmalate. The protein operates within amino-acid biosynthesis; L-leucine biosynthesis; L-leucine from 3-methyl-2-oxobutanoate: step 2/4. Its function is as follows. Catalyzes the isomerization between 2-isopropylmalate and 3-isopropylmalate, via the formation of 2-isopropylmaleate. The sequence is that of 3-isopropylmalate dehydratase large subunit from Solibacter usitatus (strain Ellin6076).